A 216-amino-acid chain; its full sequence is Uracil phosphoribosyltransferase (216 aa).

GTP contacts are provided by residues Arg-30, Arg-39, 73-76 (ASKI), and Lys-75. Arg-83 provides a ligand contact to 5-phospho-alpha-D-ribose 1-diphosphate. Lys-100 provides a ligand contact to GTP. Arg-108 contributes to the 5-phospho-alpha-D-ribose 1-diphosphate binding site. Arg-129 contributes to the GTP binding site. Residues Asp-135 and 135 to 143 (DPMLATGGT) each bind 5-phospho-alpha-D-ribose 1-diphosphate. D-ribose 5-phosphate is bound at residue Tyr-199. Uracil is bound by residues Ile-200 and 205–207 (GDF). Asp-206 is a binding site for 5-phospho-alpha-D-ribose 1-diphosphate.

This sequence belongs to the UPRTase family. Requires Mg(2+) as cofactor.

The catalysed reaction is UMP + diphosphate = 5-phospho-alpha-D-ribose 1-diphosphate + uracil. The protein operates within pyrimidine metabolism; UMP biosynthesis via salvage pathway; UMP from uracil: step 1/1. Allosterically activated by GTP. Functionally, catalyzes the conversion of uracil and 5-phospho-alpha-D-ribose 1-diphosphate (PRPP) to UMP and diphosphate. This chain is Uracil phosphoribosyltransferase (uprt), found in Dictyostelium discoideum (Social amoeba).